We begin with the raw amino-acid sequence, 1839 residues long: Mannuronan C5-epimerase AlgE3 (1839 aa).

8 PbH1 repeats span residues aspartate 133 to glutamate 155, threonine 157 to tyrosine 179, glutamine 180 to threonine 202, threonine 204 to arginine 226, threonine 257 to glycine 279, alanine 280 to valine 302, threonine 320 to glutamate 342, and threonine 347 to glycine 369. Positions serine 372 to leucine 386 are enriched in polar residues. The tract at residues serine 372–asparagine 392 is disordered. Hemolysin-type calcium-binding repeat units follow at residues glutamate 387–glycine 399, glycine 406–leucine 422, glycine 424–phenylalanine 440, threonine 538–aspartate 550, glycine 557–leucine 573, valine 574–phenylalanine 591, glutamate 695–aspartate 709, glycine 714–leucine 730, and glycine 732–phenylalanine 748. PbH1 repeat units follow at residues aspartate 975–glutamate 997, threonine 999–tyrosine 1021, leucine 1022–threonine 1044, threonine 1046–arginine 1068, threonine 1099–glycine 1121, threonine 1122–glutamate 1143, threonine 1161–glutamate 1183, and threonine 1188–glycine 1210. Over residues valine 1215–leucine 1236 the composition is skewed to polar residues. Residues valine 1215 to glycine 1238 are disordered. 10 Hemolysin-type calcium-binding repeats span residues glycine 1229–glutamate 1243, glycine 1247–leucine 1263, glycine 1265–phenylalanine 1281, glycine 1398–leucine 1414, valine 1415–phenylalanine 1432, glutamate 1536–valine 1552, histidine 1554–phenylalanine 1571, glycine 1670–serine 1681, glycine 1688–leucine 1704, and glycine 1706–phenylalanine 1722.

It belongs to the D-mannuronate C5-epimerase family. It depends on Ca(2+) as a cofactor.

It is found in the secreted. The catalysed reaction is [(1-&gt;4)-beta-D-mannuronosyl](n) = [alginate](n). The protein operates within glycan biosynthesis; alginate biosynthesis. Inhibited by zinc. In terms of biological role, converts beta-D-mannuronic acid (M) to alpha-L-guluronic acid (G), producing a polymer with gel-forming capacity, required for the formation of the cyst coat. This is Mannuronan C5-epimerase AlgE3 from Azotobacter vinelandii.